A 450-amino-acid polypeptide reads, in one-letter code: Folate synthesis bifunctional protein (450 aa).

Positions 1–166 (MTSWNFVCLS…TFAELAAIYP (166 aa)) are HPPK. A Pterin-binding domain is found at 180–441 (TQIMGIVNIT…QVEGNRRALA (262 aa)). The DHPS stretch occupies residues 182–450 (IMGIVNITDN…AAAAWAGMFV (269 aa)). N187 contributes to the Mg(2+) binding site. Residues T227, D267, N287, D358, K395, and 429-431 (RVH) contribute to the (7,8-dihydropterin-6-yl)methyl diphosphate site.

This sequence in the C-terminal section; belongs to the DHPS family. In the N-terminal section; belongs to the HPPK family. Requires Mg(2+) as cofactor.

It catalyses the reaction 6-hydroxymethyl-7,8-dihydropterin + ATP = (7,8-dihydropterin-6-yl)methyl diphosphate + AMP + H(+). The catalysed reaction is (7,8-dihydropterin-6-yl)methyl diphosphate + 4-aminobenzoate = 7,8-dihydropteroate + diphosphate. Its pathway is cofactor biosynthesis; tetrahydrofolate biosynthesis; 2-amino-4-hydroxy-6-hydroxymethyl-7,8-dihydropteridine diphosphate from 7,8-dihydroneopterin triphosphate: step 4/4. It functions in the pathway cofactor biosynthesis; tetrahydrofolate biosynthesis; 7,8-dihydrofolate from 2-amino-4-hydroxy-6-hydroxymethyl-7,8-dihydropteridine diphosphate and 4-aminobenzoate: step 1/2. This is Folate synthesis bifunctional protein (folKP) from Chlamydia trachomatis serovar D (strain ATCC VR-885 / DSM 19411 / UW-3/Cx).